The sequence spans 166 residues: MENKNLLSIGKIVNTFGIKGAVKIALEKSIEVNDINGIKLLFIENTNNVIIPKQVESISMQKSHLVVYFKEHNHINEVEIFKGKKVKYLNDNDAFSIFYDLTYYSVVYNKQNGKVIETMFNGNHDLVKVLLENEEKAFWVPLVDVYTNNIDDESRIITLKNIEGLK.

The region spanning 90 to 165 is the PRC barrel domain; it reads NDNDAFSIFY…IITLKNIEGL (76 aa).

Belongs to the RimM family. As to quaternary structure, binds ribosomal protein uS19.

Its subcellular location is the cytoplasm. Functionally, an accessory protein needed during the final step in the assembly of 30S ribosomal subunit, possibly for assembly of the head region. Essential for efficient processing of 16S rRNA. May be needed both before and after RbfA during the maturation of 16S rRNA. It has affinity for free ribosomal 30S subunits but not for 70S ribosomes. This chain is Ribosome maturation factor RimM, found in Mesoplasma florum (strain ATCC 33453 / NBRC 100688 / NCTC 11704 / L1) (Acholeplasma florum).